Here is a 590-residue protein sequence, read N- to C-terminus: MKKYPKIGIRPTIDGRQGGVRESLEEKTMNLAKAVAELITSNLKNGDGTPVECVIADGTIGRVAESAACAEKFEREGVGATITVTSCWCYGAETMDMNPYYPKAVWGFNGTERPGAVYLAAVLAGHAQKGLPAFGIYGRDVQDLNDNSIPADVAEKILRFARAAQAVATMRGKSYLSMGSVSMGIAGSIVNPDFFQEYLGMRNESIDLTEIIRRMAEGIYDKEEYAKAMAWTEKYCKKNEGNDFNIPEKTKTRAQKDEDWEFIVKMTIIMRDLMQGNPKLKELGFKEEALGHNAIAAGFQGQRQWTDFYPNGDFSEALLNTSFDWNGIREAFVVTTENDACNGVAMLFGHLLTNRAQIFSDVRTYWSPEAVKRVTGKELTGMAANGIIHLINSGATTLDGTGQQTNANGEPAMKPCWEITEGEVEKCLEATTWYPANRDYFRGGGFSSNFLSKGGMPVTMMRLNLIKGLGPVLQIAEGWTVEIDPEIHKLLDERTDRTWPTTWFVPRLCDKPAFKDVYSVMNNWGANHGAISYGHIGQDVITLASMLRIPVCMHNVEEDQIFRPAAWNAFGMDKEGADYRACTTYGPIYK.

Residues Glu-337 and Asp-361 each act as proton acceptor in the active site. Mn(2+)-binding residues include Glu-337, Asp-361, and His-528.

It belongs to the L-fucose isomerase family. The cofactor is Mn(2+).

Its subcellular location is the cytoplasm. The catalysed reaction is L-fucose = L-fuculose. The protein operates within carbohydrate degradation; L-fucose degradation; L-lactaldehyde and glycerone phosphate from L-fucose: step 1/3. Converts the aldose L-fucose into the corresponding ketose L-fuculose. In Bacteroides fragilis (strain ATCC 25285 / DSM 2151 / CCUG 4856 / JCM 11019 / LMG 10263 / NCTC 9343 / Onslow / VPI 2553 / EN-2), this protein is L-fucose isomerase.